Here is a 37-residue protein sequence, read N- to C-terminus: Photosystem II reaction center protein M (37 aa).

The chain crosses the membrane as a helical span at residues 7-27 (GFIAVLMFLAIPTAFLLIPYV).

It belongs to the PsbM family. PSII is composed of 1 copy each of membrane proteins PsbA, PsbB, PsbC, PsbD, PsbE, PsbF, PsbH, PsbI, PsbJ, PsbK, PsbL, PsbM, PsbT, PsbX, PsbY, PsbZ, Psb30/Ycf12, at least 3 peripheral proteins of the oxygen-evolving complex and a large number of cofactors. It forms dimeric complexes.

The protein localises to the plastid. Its subcellular location is the chloroplast thylakoid membrane. Functionally, one of the components of the core complex of photosystem II (PSII). PSII is a light-driven water:plastoquinone oxidoreductase that uses light energy to abstract electrons from H(2)O, generating O(2) and a proton gradient subsequently used for ATP formation. It consists of a core antenna complex that captures photons, and an electron transfer chain that converts photonic excitation into a charge separation. This subunit is found at the monomer-monomer interface. The chain is Photosystem II reaction center protein M from Pinus koraiensis (Korean pine).